A 436-amino-acid polypeptide reads, in one-letter code: UDP-N-acetylmuramate--L-alanine ligase (436 aa).

111–117 provides a ligand contact to ATP; that stretch reads GTHGKTS.

This sequence belongs to the MurCDEF family.

Its subcellular location is the cytoplasm. It carries out the reaction UDP-N-acetyl-alpha-D-muramate + L-alanine + ATP = UDP-N-acetyl-alpha-D-muramoyl-L-alanine + ADP + phosphate + H(+). It participates in cell wall biogenesis; peptidoglycan biosynthesis. Functionally, cell wall formation. This Lactiplantibacillus plantarum (strain ATCC BAA-793 / NCIMB 8826 / WCFS1) (Lactobacillus plantarum) protein is UDP-N-acetylmuramate--L-alanine ligase.